The sequence spans 404 residues: Probable tRNA sulfurtransferase (404 aa).

A THUMP domain is found at 60-165 (RSVIEALKPV…DEAAYLSHED (106 aa)). ATP is bound by residues 183–184 (ML), 208–209 (HF), arginine 265, glycine 287, and glutamine 296.

The protein belongs to the ThiI family.

It is found in the cytoplasm. The enzyme catalyses [ThiI sulfur-carrier protein]-S-sulfanyl-L-cysteine + a uridine in tRNA + 2 reduced [2Fe-2S]-[ferredoxin] + ATP + H(+) = [ThiI sulfur-carrier protein]-L-cysteine + a 4-thiouridine in tRNA + 2 oxidized [2Fe-2S]-[ferredoxin] + AMP + diphosphate. The catalysed reaction is [ThiS sulfur-carrier protein]-C-terminal Gly-Gly-AMP + S-sulfanyl-L-cysteinyl-[cysteine desulfurase] + AH2 = [ThiS sulfur-carrier protein]-C-terminal-Gly-aminoethanethioate + L-cysteinyl-[cysteine desulfurase] + A + AMP + 2 H(+). The protein operates within cofactor biosynthesis; thiamine diphosphate biosynthesis. Its function is as follows. Catalyzes the ATP-dependent transfer of a sulfur to tRNA to produce 4-thiouridine in position 8 of tRNAs, which functions as a near-UV photosensor. Also catalyzes the transfer of sulfur to the sulfur carrier protein ThiS, forming ThiS-thiocarboxylate. This is a step in the synthesis of thiazole, in the thiamine biosynthesis pathway. The sulfur is donated as persulfide by IscS. The chain is Probable tRNA sulfurtransferase from Streptococcus equi subsp. zooepidemicus (strain H70).